We begin with the raw amino-acid sequence, 262 residues long: Transmembrane protein 81 (262 aa).

The signal sequence occupies residues 1–30 (MKAVATVFICGSLVLITYLPLVVTSPQTLA). Over 31-225 (IPEKLRQAVG…HLPGWRKKVS (195 aa)) the chain is Extracellular. Asn45 carries an N-linked (GlcNAc...) asparagine glycan. The Ig-like domain maps to 83 to 171 (TNWICGMLHF…VQQLKNLKLV (89 aa)). Cys104 and Cys160 are joined by a disulfide. Asn211 carries N-linked (GlcNAc...) asparagine glycosylation. The chain crosses the membrane as a helical span at residues 226–246 (LALGVGIAAGVVGGVLVNVAL). Residues 247–262 (CRVLGGTGGNGNLSSL) lie on the Cytoplasmic side of the membrane.

Forms a complex with IZUMO1 and SPACA6 on spermatocyte cell membrane required for fertilization.

The protein localises to the cell membrane. Its function is as follows. Essential fertilization factor required for male fertility. Part of a conserved trimeric sperm complex with the essential fertilization factors IZUMO1 and SPACA6 which bridges sperm and oocyte membranes during fertilization by binding to IZUMO1R/JUNO on the oocyte. In Rattus norvegicus (Rat), this protein is Transmembrane protein 81 (Tmem81).